Reading from the N-terminus, the 47-residue chain is Delta-actitoxin-Axm1d (47 aa).

Cystine bridges form between Cys4–Cys44, Cys6–Cys34, and Cys27–Cys45.

This sequence belongs to the sea anemone sodium channel inhibitory toxin family. Type I subfamily.

The protein localises to the secreted. Its subcellular location is the nematocyst. Binds specifically to voltage-gated sodium channels (Nav), thereby delaying their inactivation during signal transduction. Thus it strongly stimulates mammalian cardiac muscle contraction. This is Delta-actitoxin-Axm1d from Anthopleura xanthogrammica (Giant green sea anemone).